Here is a 242-residue protein sequence, read N- to C-terminus: Venom nerve growth factor 2 (242 aa).

The first 18 residues, 1-18 (MSMLCYTLIIAFLIGIWA), serve as a signal peptide directing secretion. Residues 19 to 125 (APKSEDNVPL…ALNRNIRSKR (107 aa)) constitute a propeptide that is removed on maturation. Residues 46 to 69 (KALKTSRNTDQRHPAPKKAEDQEL) are disordered. The span at 52–66 (RNTDQRHPAPKKAED) shows a compositional bias: basic and acidic residues. Cystine bridges form between cysteine 139–cysteine 203, cysteine 181–cysteine 231, and cysteine 191–cysteine 233. N-linked (GlcNAc...) asparagine glycosylation is present at asparagine 147.

This sequence belongs to the NGF-beta family. Homodimer; non-covalently linked. As to expression, expressed by the venom gland.

The protein localises to the secreted. Its function is as follows. Nerve growth factor is important for the development and maintenance of the sympathetic and sensory nervous systems. It stimulates division and differentiation of sympathetic and embryonic sensory neurons as well as basal forebrain cholinergic neurons in the brain. Its relevance in the snake venom is not clear. However, it has been shown to inhibit metalloproteinase-dependent proteolysis of platelet glycoprotein Ib alpha, suggesting a metalloproteinase inhibition to prevent metalloprotease autodigestion and/or protection against prey proteases. Binds a lipid between the two protein chains in the homodimer. The lipid-bound form promotes histamine relase from mouse mast cells, contrary to the lipid-free form. This is Venom nerve growth factor 2 from Demansia vestigiata (Lesser black whip snake).